The following is a 209-amino-acid chain: Orotate phosphoribosyltransferase (209 aa).

5-phospho-alpha-D-ribose 1-diphosphate contacts are provided by residues R96, K100, H102, and 122 to 130 (EDLISTGGS). S126 contributes to the orotate binding site.

This sequence belongs to the purine/pyrimidine phosphoribosyltransferase family. PyrE subfamily. As to quaternary structure, homodimer. Mg(2+) serves as cofactor.

It catalyses the reaction orotidine 5'-phosphate + diphosphate = orotate + 5-phospho-alpha-D-ribose 1-diphosphate. The protein operates within pyrimidine metabolism; UMP biosynthesis via de novo pathway; UMP from orotate: step 1/2. Functionally, catalyzes the transfer of a ribosyl phosphate group from 5-phosphoribose 1-diphosphate to orotate, leading to the formation of orotidine monophosphate (OMP). The polypeptide is Orotate phosphoribosyltransferase (Streptococcus thermophilus (strain ATCC BAA-491 / LMD-9)).